The primary structure comprises 425 residues: Homogentisate 1,2-dioxygenase (425 aa).

Catalysis depends on histidine 283, which acts as the Proton acceptor. Residues histidine 326 and glutamate 332 each coordinate Fe cation. Tyrosine 341 and histidine 362 together coordinate homogentisate. A Fe cation-binding site is contributed by histidine 362.

The protein belongs to the homogentisate dioxygenase family. Hexamer; dimer of trimers. The cofactor is Fe cation.

The catalysed reaction is homogentisate + O2 = 4-maleylacetoacetate + H(+). It functions in the pathway amino-acid degradation; L-phenylalanine degradation; acetoacetate and fumarate from L-phenylalanine: step 4/6. Its function is as follows. Involved in the catabolism of homogentisate (2,5-dihydroxyphenylacetate or 2,5-OH-PhAc), a central intermediate in the degradation of phenylalanine and tyrosine. Catalyzes the oxidative ring cleavage of the aromatic ring of homogentisate to yield maleylacetoacetate. The chain is Homogentisate 1,2-dioxygenase from Caulobacter vibrioides (strain ATCC 19089 / CIP 103742 / CB 15) (Caulobacter crescentus).